Reading from the N-terminus, the 1122-residue chain is Receptor-type guanylate cyclase gcy-5 (1122 aa).

An N-terminal signal peptide occupies residues 1 to 19 (MRLLYFSMVLLWVLGASEC). At 20–486 (QVIPSSRRTL…CPVQFWDQYG (467 aa)) the chain is on the extracellular side. 7 N-linked (GlcNAc...) asparagine glycosylation sites follow: Asn252, Asn299, Asn344, Asn350, Asn378, Asn434, and Asn439. A helical membrane pass occupies residues 487–507 (VLIFVASIVLIFLICIMLMCF). Residues 508-1122 (GFMIRGRRAE…KSKMDTLKVV (615 aa)) are Cytoplasmic-facing. The segment at 536–562 (QKEKRKPNSRRSLQSGPSTITGESKMT) is disordered. The 289-residue stretch at 542–830 (PNSRRSLQSG…NTNLMDHVFN (289 aa)) folds into the Protein kinase domain. The segment covering 545–559 (RRSLQSGPSTITGES) has biased composition (polar residues). Residues 888–1018 (TVLFSDVVKF…DTVNTASRME (131 aa)) enclose the Guanylate cyclase domain. Residues 1071-1122 (SDTKSLSTRTTPPITDENWPPQMKEDLKKRAVTPYPERQRSGKSKMDTLKVV) are disordered. A compositionally biased stretch (polar residues) spans 1074-1083 (KSLSTRTTPP). Positions 1107-1122 (ERQRSGKSKMDTLKVV) are enriched in basic and acidic residues.

This sequence belongs to the adenylyl cyclase class-4/guanylyl cyclase family. In terms of tissue distribution, expressed in both ASEL and ASER neurons during early embryonic stages and becomes specifically expressed in ASER neuron in early larval stage.

Its subcellular location is the cell membrane. It carries out the reaction GTP = 3',5'-cyclic GMP + diphosphate. Functionally, guanylate cyclase involved in the production of the second messenger cGMP. Unlike other guanylate cyclases expressed in ASE neurons, may not play a role in chemotaxis responses to salt ions mediated by ASE sensory neurons. The polypeptide is Receptor-type guanylate cyclase gcy-5 (Caenorhabditis elegans).